Consider the following 415-residue polypeptide: D-serine dehydratase (415 aa).

K68 bears the N6-(pyridoxal phosphate)lysine mark. Residues Y204, Y211, T253, G279, and N280 each coordinate pyridoxal 5'-phosphate. Zn(2+) is bound by residues H385 and C387.

This sequence belongs to the DSD1 family. Homodimer. Pyridoxal 5'-phosphate is required as a cofactor. The cofactor is Zn(2+).

It is found in the cytoplasm. The protein localises to the nucleus. It catalyses the reaction D-serine = pyruvate + NH4(+). Catalyzes the conversion of D-serine to pyruvate and ammonia. May play a role in D-serine detoxification. The chain is D-serine dehydratase from Schizosaccharomyces pombe (strain 972 / ATCC 24843) (Fission yeast).